We begin with the raw amino-acid sequence, 345 residues long: UDP-3-O-acylglucosamine N-acyltransferase (345 aa).

H237 acts as the Proton acceptor in catalysis.

It belongs to the transferase hexapeptide repeat family. LpxD subfamily. In terms of assembly, homotrimer.

It carries out the reaction a UDP-3-O-[(3R)-3-hydroxyacyl]-alpha-D-glucosamine + a (3R)-hydroxyacyl-[ACP] = a UDP-2-N,3-O-bis[(3R)-3-hydroxyacyl]-alpha-D-glucosamine + holo-[ACP] + H(+). It functions in the pathway bacterial outer membrane biogenesis; LPS lipid A biosynthesis. Functionally, catalyzes the N-acylation of UDP-3-O-acylglucosamine using 3-hydroxyacyl-ACP as the acyl donor. Is involved in the biosynthesis of lipid A, a phosphorylated glycolipid that anchors the lipopolysaccharide to the outer membrane of the cell. In Geobacter sp. (strain M21), this protein is UDP-3-O-acylglucosamine N-acyltransferase.